The following is a 515-amino-acid chain: 2,3-bisphosphoglycerate-independent phosphoglycerate mutase (515 aa).

Residues aspartate 14 and serine 63 each contribute to the Mn(2+) site. Serine 63 is a catalytic residue. Residues histidine 124, 154 to 155 (RD), arginine 186, arginine 192, 259 to 262 (RADR), and lysine 334 each bind substrate. Positions 401, 405, 442, 443, and 460 each coordinate Mn(2+).

The protein belongs to the BPG-independent phosphoglycerate mutase family. It depends on Mg(2+) as a cofactor. Requires Mn(2+) as cofactor.

It carries out the reaction (2R)-2-phosphoglycerate = (2R)-3-phosphoglycerate. The protein operates within carbohydrate degradation; glycolysis; pyruvate from D-glyceraldehyde 3-phosphate: step 3/5. Activity is not affected by 2,3-bisphosphoglycerate. In terms of biological role, catalyzes the interconversion of 2-phosphoglycerate and 3-phosphoglycerate. This chain is 2,3-bisphosphoglycerate-independent phosphoglycerate mutase, found in Onchocerca volvulus.